The following is a 1069-amino-acid chain: MNTGGRLIAGSHNRNEFVLINADESARIRSVEELSGQTCQICGDEIELSVDGESFVACNECAFPVCRPCYEYERREGNQSCPQCKTRYKRIKGSPRVEGDEEDDGIDDLDFEFDYSRSGLESETFSRRNSEFDLASAPPGSQIPLLTYGEEDVEISSDSHALIVSPSPGHIHRVHQPHFPDPAAHPRPMVPQKDLAVYGYGSVAWKDRMEEWKRKQNEKYQVVKHDGDSSLGDGDDADIPMMDEGRQPLSRKVPIKSSKINPYRMLIVLRLVILGLFFHYRILHPVNDAYALWLISVICEIWFAVSWVLDQFPKWYPIERETYLDRLSLRYEKEGKPSELAGVDVFVSTVDPMKEPPLITANTVLSILAVDYPVDRVACYVSDDGAAMLTFEALSETAEFARKWVPFCKKYTIEPRAPEWYFCHKMDYLKNKVHPAFVRERRAMKRDYEEFKVKINALVATAQKVPEEGWTMQDGTPWPGNNVRDHPGMIQVFLGNNGVRDVENNELPRLVYVSREKRPGFDHHKKAGAMNSLIRVSGVLSNAPYLLNVDCDHYINNSKALREAMCFMMDPQSGKKICYVQFPQRFDGIDKSDRYSNRNVVFFDINMKGLDGLQGPIYVGTGCVFRRQALYGFDAPKKKKTKRMTCNCWPKWCLFCCGLRKNRKSKTTDKKKKNREASKQIHALENIEEGTKGTNDAAKSPEAAQLKLEKKFGQSPVFVASAGMENGGLARNASPASLLREAIQVISCGYEDKTEWGKEIGWIYGSVTEDILTGFKMHSHGWRSVYCTPKIPAFKGSAPINLSDRLHQVLRWALGSVEIFLSRHCPIWYGYGGGLKWLERLSYINSVVYPWTSIPLLVYCSLPAICLLTGKFIVPEISNYASILFMALFGSIAVTGILEMQWGKVGIDDWWRNEQFWVIGGVSAHLFALFQGLLKVLAGVETNFTVTSKAADDGEFSELYIFKWTSLLIPPTTLLIINVIGVIVGISDAISNGYDSWGPLFGRLFFAFWVILHLYPFLKGLLGKQDRMPTIILVWSILLASILTLLWVRVNPFVAKGGPILEICGLDCL.

M1 carries the N-acetylmethionine modification. At 1 to 265 (MNTGGRLIAG…KSSKINPYRM (265 aa)) the chain is on the cytoplasmic side. Zn(2+) contacts are provided by C39, C42, C58, C61, C66, C69, C81, and C84. The RING-type; degenerate zinc-finger motif lies at 39-85 (CQICGDEIELSVDGESFVACNECAFPVCRPCYEYERREGNQSCPQCK). Phosphoserine occurs at positions 229 and 230. A helical transmembrane segment spans residues 266–286 (LIVLRLVILGLFFHYRILHPV). Topologically, residues 287-288 (ND) are extracellular. The helical transmembrane segment at 289 to 309 (AYALWLISVICEIWFAVSWVL) threads the bilayer. Topologically, residues 310–853 (DQFPKWYPIE…INSVVYPWTS (544 aa)) are cytoplasmic. UDP-alpha-D-glucose contacts are provided by S348, K354, E355, and D384. The active site involves D384. Positions 438–464 (VRERRAMKRDYEEFKVKINALVATAQK) form a coiled coil. Residue K525 participates in UDP-alpha-D-glucose binding. Mn(2+) contacts are provided by K526 and D550. D770 is an active-site residue. A helical transmembrane segment spans residues 854 to 874 (IPLLVYCSLPAICLLTGKFIV). The Extracellular segment spans residues 875-879 (PEISN). Residues 880–900 (YASILFMALFGSIAVTGILEM) form a helical membrane-spanning segment. At 901–915 (QWGKVGIDDWWRNEQ) the chain is on the cytoplasmic side. A helical membrane pass occupies residues 916–936 (FWVIGGVSAHLFALFQGLLKV). At 937–965 (LAGVETNFTVTSKAADDGEFSELYIFKWT) the chain is on the extracellular side. An N-linked (GlcNAc...) asparagine glycan is attached at N943. The chain crosses the membrane as a helical span at residues 966 to 986 (SLLIPPTTLLIINVIGVIVGI). The Cytoplasmic portion of the chain corresponds to 987–997 (SDAISNGYDSW). A helical transmembrane segment spans residues 998 to 1018 (GPLFGRLFFAFWVILHLYPFL). The Extracellular portion of the chain corresponds to 1019–1027 (KGLLGKQDR). The helical transmembrane segment at 1028–1048 (MPTIILVWSILLASILTLLWV) threads the bilayer. Residues 1049-1069 (RVNPFVAKGGPILEICGLDCL) are Cytoplasmic-facing.

It belongs to the glycosyltransferase 2 family. Plant cellulose synthase subfamily. Zn(2+) serves as cofactor. It depends on Mn(2+) as a cofactor. As to expression, expressed in young plants, stems and flowers.

Its subcellular location is the cell membrane. It catalyses the reaction [(1-&gt;4)-beta-D-glucosyl](n) + UDP-alpha-D-glucose = [(1-&gt;4)-beta-D-glucosyl](n+1) + UDP + H(+). It functions in the pathway glycan metabolism; plant cellulose biosynthesis. Its function is as follows. Catalytic subunit of cellulose synthase terminal complexes ('rosettes'), required for beta-1,4-glucan microfibril crystallization, a major mechanism of the cell wall formation. This Arabidopsis thaliana (Mouse-ear cress) protein is Cellulose synthase A catalytic subunit 5 [UDP-forming].